The primary structure comprises 131 residues: D-ribose pyranase (131 aa).

The Proton donor role is filled by His-20. Substrate-binding positions include Asp-28, His-98, and 120 to 122 (YAN).

This sequence belongs to the RbsD / FucU family. RbsD subfamily. In terms of assembly, homodecamer.

It is found in the cytoplasm. It catalyses the reaction beta-D-ribopyranose = beta-D-ribofuranose. It participates in carbohydrate metabolism; D-ribose degradation; D-ribose 5-phosphate from beta-D-ribopyranose: step 1/2. In terms of biological role, catalyzes the interconversion of beta-pyran and beta-furan forms of D-ribose. This Enterococcus faecalis (strain ATCC 700802 / V583) protein is D-ribose pyranase.